The primary structure comprises 191 residues: Orotate phosphoribosyltransferase (191 aa).

114–122 lines the 5-phospho-alpha-D-ribose 1-diphosphate pocket; the sequence is EDVITTGGS. 2 residues coordinate orotate: T118 and R146.

The protein belongs to the purine/pyrimidine phosphoribosyltransferase family. PyrE subfamily. In terms of assembly, homodimer. Mg(2+) serves as cofactor.

It catalyses the reaction orotidine 5'-phosphate + diphosphate = orotate + 5-phospho-alpha-D-ribose 1-diphosphate. It functions in the pathway pyrimidine metabolism; UMP biosynthesis via de novo pathway; UMP from orotate: step 1/2. In terms of biological role, catalyzes the transfer of a ribosyl phosphate group from 5-phosphoribose 1-diphosphate to orotate, leading to the formation of orotidine monophosphate (OMP). The protein is Orotate phosphoribosyltransferase of Desulforamulus reducens (strain ATCC BAA-1160 / DSM 100696 / MI-1) (Desulfotomaculum reducens).